The chain runs to 349 residues: D-alanine--D-alanine ligase (349 aa).

Residues 132-335 (KHVFEAVGVP…YSDLIEKLVD (204 aa)) form the ATP-grasp domain. 162–217 (VEKLDFPVFVKPANMGSSVGISKVDDLADLQPALSEAYKYDNRVVIEQGVDAREIE) is a binding site for ATP. Mg(2+)-binding residues include Asp-289, Glu-302, and Asn-304.

The protein belongs to the D-alanine--D-alanine ligase family. Mg(2+) is required as a cofactor. Requires Mn(2+) as cofactor.

It is found in the cytoplasm. The catalysed reaction is 2 D-alanine + ATP = D-alanyl-D-alanine + ADP + phosphate + H(+). Its pathway is cell wall biogenesis; peptidoglycan biosynthesis. In terms of biological role, cell wall formation. In Lactococcus lactis subsp. cremoris (strain MG1363), this protein is D-alanine--D-alanine ligase.